We begin with the raw amino-acid sequence, 1261 residues long: Mediator of RNA polymerase II transcription subunit 14 (1261 aa).

A compositionally biased stretch (basic and acidic residues) spans 1-11 (MPNGKQQHEVT). 3 disordered regions span residues 1 to 21 (MPNGKQQHEVTESSSPPEIPH), 413 to 435 (NETAIVDDNDNDNDDTNNTGETE), and 1193 to 1220 (DNDIKPQQQEPQQNEKENSKTTSKENET). Residues 417–427 (IVDDNDNDNDD) show a composition bias toward acidic residues. Residues 1205 to 1220 (QNEKENSKTTSKENET) are compositionally biased toward basic and acidic residues.

The protein belongs to the Mediator complex subunit 14 family. As to quaternary structure, component of the Mediator complex.

The protein resides in the nucleus. Its function is as follows. Component of the Mediator complex, a coactivator involved in the regulated transcription of nearly all RNA polymerase II-dependent genes. Mediator functions as a bridge to convey information from gene-specific regulatory proteins to the basal RNA polymerase II transcription machinery. Mediator is recruited to promoters by direct interactions with regulatory proteins and serves as a scaffold for the assembly of a functional preinitiation complex with RNA polymerase II and the general transcription factors. This is Mediator of RNA polymerase II transcription subunit 14 (MED14) from Candida albicans (strain SC5314 / ATCC MYA-2876) (Yeast).